The primary structure comprises 271 residues: NADPH-dependent 7-cyano-7-deazaguanine reductase (271 aa).

81-83 (IES) contributes to the substrate binding site. 83–84 (SK) is a binding site for NADPH. Residue C177 is the Thioimide intermediate of the active site. D184 serves as the catalytic Proton donor. 216 to 217 (HE) contributes to the substrate binding site. Residue 245–246 (RG) coordinates NADPH.

The protein belongs to the GTP cyclohydrolase I family. QueF type 2 subfamily. As to quaternary structure, homodimer.

It localises to the cytoplasm. The enzyme catalyses 7-aminomethyl-7-carbaguanine + 2 NADP(+) = 7-cyano-7-deazaguanine + 2 NADPH + 3 H(+). It functions in the pathway tRNA modification; tRNA-queuosine biosynthesis. In terms of biological role, catalyzes the NADPH-dependent reduction of 7-cyano-7-deazaguanine (preQ0) to 7-aminomethyl-7-deazaguanine (preQ1). This chain is NADPH-dependent 7-cyano-7-deazaguanine reductase, found in Xanthomonas oryzae pv. oryzae (strain MAFF 311018).